The following is a 490-amino-acid chain: MVPVVALVGRPNVGKSTLFNRLTRTRDALVADFPGLTRDRKYGRAEVEGREFICIDTGGIDGTEDGVETRMAEQSLLAIEEADVVLFMVDARAGLMPADEAIAKHLRSREKPTFLVANKTDGLDPDQAVVDFYSLGLGEIYPIAASHGRGVLSLLEHVLLPWMDDVAPQEEVDEDAEYWAQFEVEQNGEEAPEDDFDPQSLPIKLAIVGRPNVGKSTLTNRILGEERVVVYDMPGTTRDSIYIPMERDEREYVLIDTAGVRKRGKITDAVEKFSVIKTLQAIEDANVVLLVIDAREGISDQDLSLLGFILNSGRSLVIVVNKWDGLSQEVKEQVKETLDFRLGFIDFARVHFISALHGSDVGNLFESVREAYDSSTRRVSTAMLTRIMTMAVEDHQPPLVRGRRVKLKYAHAGGYNPPIVVIHGNQVKDLPDSYKRYLMNYFRKSLEVMGTPIRIQFKEGENPYANKRNTLTPTQMRKRKRLMKHIKKSK.

2 EngA-type G domains span residues 3–166 (PVVA…MDDV) and 203–376 (IKLA…DSST). GTP-binding positions include 9 to 16 (GRPNVGKS), 56 to 60 (DTGGI), 118 to 121 (NKTD), 209 to 216 (GRPNVGKS), 256 to 260 (DTAGV), and 321 to 324 (NKWD). Positions 377 to 461 (RRVSTAMLTR…PIRIQFKEGE (85 aa)) constitute a KH-like domain.

It belongs to the TRAFAC class TrmE-Era-EngA-EngB-Septin-like GTPase superfamily. EngA (Der) GTPase family. Associates with the 50S ribosomal subunit.

In terms of biological role, GTPase that plays an essential role in the late steps of ribosome biogenesis. The sequence is that of GTPase Der from Salmonella gallinarum (strain 287/91 / NCTC 13346).